A 95-amino-acid polypeptide reads, in one-letter code: Small ubiquitin-related modifier 2-B (95 aa).

A Glycyl lysine isopeptide (Lys-Gly) (interchain with G-Cter in SUMO) cross-link involves residue Lys11. The 80-residue stretch at Asp16–Tyr95 folds into the Ubiquitin-like domain. Residue Gly93 forms a Glycyl lysine isopeptide (Gly-Lys) (interchain with K-? in acceptor proteins) linkage. Residues Ser94 to Tyr95 constitute a propeptide that is removed on maturation.

It belongs to the ubiquitin family. SUMO subfamily. In terms of assembly, interacts with sae2 and ube2i. Covalently attached to a number of proteins, including top2. Polymeric chains can be formed through Lys-11 cross-linking. Post-translationally, cleavage of precursor form by a sentrin-specific protease is necessary for function.

It is found in the nucleus. Ubiquitin-like protein that can be covalently attached to proteins as a monomer or as a lysine-linked polymer. Covalent attachment via an isopeptide bond to its substrates requires prior activation by the E1 complex sae1-sae2 and linkage to the E2 enzyme ube2i, and can be promoted by an E3 ligase such as pias1-4. This post-translational modification on lysine residues of proteins plays a crucial role in a number of cellular processes such as nuclear transport, DNA replication and repair, mitosis and signal transduction. Polymeric sumo2 chains are also susceptible to polyubiquitination which functions as a signal for proteasomal degradation of modified proteins. The polypeptide is Small ubiquitin-related modifier 2-B (sumo2-b) (Xenopus laevis (African clawed frog)).